The sequence spans 182 residues: Heat shock protein beta-2 (182 aa).

The sHSP domain occupies 55–163; that stretch reads PAGEGSRAGA…DTEVNEVYIS (109 aa).

This sequence belongs to the small heat shock protein (HSP20) family. In terms of assembly, interacts with DMPK; may enhance its kinase activity. Expressed preferentially in skeletal muscle and heart but not in the lens.

It is found in the cytoplasm. It localises to the nucleus. In terms of biological role, may regulate the kinase DMPK. This chain is Heat shock protein beta-2 (HSPB2), found in Homo sapiens (Human).